The chain runs to 700 residues: Protein UL29/28 (700 aa).

A disordered region spans residues 1–30 (MSGRRKGCSAATASSSSSSPPSRLPLPGHA). Residues 9-21 (SAATASSSSSSPP) show a composition bias toward low complexity.

The protein belongs to the herpesviridae US22 family. Interacts with UL38 and host HDAC1; these interactions are necessary for the HDAC1 interaction with UL38. Interacts with host MTA2.

Its subcellular location is the virion. It is found in the host nucleus. It localises to the host cytoplasm. Functionally, contributes to activation of immediate-early gene expression. The protein is Protein UL29/28 (UL29) of Human cytomegalovirus (strain Merlin) (HHV-5).